The sequence spans 211 residues: Octanoyltransferase (211 aa).

The 176-residue stretch at 28–203 folds into the BPL/LPL catalytic domain; that stretch reads GSAPETLLLV…HFQSLLKTWL (176 aa). Residues 66–73, 133–135, and 146–148 each bind substrate; these read RGGDITYH, SIG, and GFA. Residue C164 is the Acyl-thioester intermediate of the active site.

Belongs to the LipB family.

It localises to the cytoplasm. It catalyses the reaction octanoyl-[ACP] + L-lysyl-[protein] = N(6)-octanoyl-L-lysyl-[protein] + holo-[ACP] + H(+). It participates in protein modification; protein lipoylation via endogenous pathway; protein N(6)-(lipoyl)lysine from octanoyl-[acyl-carrier-protein]: step 1/2. Catalyzes the transfer of endogenously produced octanoic acid from octanoyl-acyl-carrier-protein onto the lipoyl domains of lipoate-dependent enzymes. Lipoyl-ACP can also act as a substrate although octanoyl-ACP is likely to be the physiological substrate. The protein is Octanoyltransferase of Syntrophotalea carbinolica (strain DSM 2380 / NBRC 103641 / GraBd1) (Pelobacter carbinolicus).